The chain runs to 37 residues: Large ribosomal subunit protein bL36 (37 aa).

Belongs to the bacterial ribosomal protein bL36 family.

This chain is Large ribosomal subunit protein bL36, found in Geobacter metallireducens (strain ATCC 53774 / DSM 7210 / GS-15).